The sequence spans 2358 residues: Cell wall alpha-1,3-glucan synthase mok13 (2358 aa).

A compositionally biased stretch (basic and acidic residues) spans 1645-1659; it reads EGLENEENELKDKAP. Positions 1645-1669 are disordered; it reads EGLENEENELKDKAPPNEPNVGSLF.

This sequence belongs to the glycosyltransferase group 1 family.

The enzyme catalyses [(1-&gt;3)-alpha-D-glucosyl](n) + UDP-alpha-D-glucose = [(1-&gt;3)-alpha-D-glucosyl](n+1) + UDP + H(+). The chain is Cell wall alpha-1,3-glucan synthase mok13 (mok13) from Schizosaccharomyces pombe (strain 972 / ATCC 24843) (Fission yeast).